The chain runs to 857 residues: DNA mismatch repair protein MutS (857 aa).

613 to 620 (GPNMGGKS) provides a ligand contact to ATP. A disordered region spans residues 797-820 (TSLPHEQPAAHKAKDAPQVPHQSD).

It belongs to the DNA mismatch repair MutS family.

Functionally, this protein is involved in the repair of mismatches in DNA. It is possible that it carries out the mismatch recognition step. This protein has a weak ATPase activity. In Pseudomonas putida (strain ATCC 47054 / DSM 6125 / CFBP 8728 / NCIMB 11950 / KT2440), this protein is DNA mismatch repair protein MutS.